Consider the following 531-residue polypeptide: MQLTVWTYEGPPHVGAMRVATGMEGLHYVLHAPQGDTYADLLFTMIERRDRRPPVTYTTFAARDLGKDTAELFKTAAQNAYDRFKPQAMIVGASCTGSLIQDDPGGLAKALALPIPVVAIDLPAYQRKENWGAAETFYQLVRAIAGPKAPPPGSKRPERPAGKRPSCNLLGPTALGFRHRDDIIELTTLLGKLGIDVNVTAPMGATPADLARLGEADFNVVMYPETASQAASWLHRMFHQPFTKIVPIGVSATREFIEEVAKLADVDPTAVLKSYSSRLPWYSHSVDSTYLTGKRVFIFGDATHVVAAARMASDEMGFKVVGLGTYSREFGREIREAAKLYDVEPLITDDYLEVEAKVAELHPELVLGTQMERHIAKRLGVPCAVISAPVHVQDFPARYAPQMGFEGANVIFDTWVHPLMMGLEEHLLTMFRDDFEFKDGATPSHLGVGHAPAPAPAVADSAAVEVLDATTATTTETTTAVWAADAEKELRKIPFFVRGKARRNTERFANENGVATITVETLYDAKAHFSR.

Asp36 is a binding site for [4Fe-4S] cluster. The active-site Proton donor is Asp287. 422–423 (GL) lines the substrate pocket.

The protein belongs to the ChlB/BchB/BchZ family. In terms of assembly, protochlorophyllide reductase is composed of three subunits; BchL, BchN and BchB. Forms a heterotetramer of two BchB and two BchN subunits. The cofactor is [4Fe-4S] cluster.

The enzyme catalyses chlorophyllide a + oxidized 2[4Fe-4S]-[ferredoxin] + 2 ADP + 2 phosphate = protochlorophyllide a + reduced 2[4Fe-4S]-[ferredoxin] + 2 ATP + 2 H2O. The protein operates within porphyrin-containing compound metabolism; bacteriochlorophyll biosynthesis (light-independent). In terms of biological role, component of the dark-operative protochlorophyllide reductase (DPOR) that uses Mg-ATP and reduced ferredoxin to reduce ring D of protochlorophyllide (Pchlide) to form chlorophyllide a (Chlide). This reaction is light-independent. The NB-protein (BchN-BchB) is the catalytic component of the complex. This chain is Light-independent protochlorophyllide reductase subunit B, found in Rhodopseudomonas palustris (strain BisA53).